Here is a 270-residue protein sequence, read N- to C-terminus: Formamidopyrimidine-DNA glycosylase (270 aa).

The active-site Schiff-base intermediate with DNA is proline 2. Catalysis depends on glutamate 3, which acts as the Proton donor. Residue lysine 57 is the Proton donor; for beta-elimination activity of the active site. The DNA site is built by histidine 90, arginine 109, and lysine 151. The FPG-type zinc-finger motif lies at 236 to 270 (RVYGRKGQACEVCESEIQSVTLGQRNTFFCEQCQK). Arginine 260 functions as the Proton donor; for delta-elimination activity in the catalytic mechanism.

Belongs to the FPG family. Monomer. Zn(2+) is required as a cofactor.

It carries out the reaction Hydrolysis of DNA containing ring-opened 7-methylguanine residues, releasing 2,6-diamino-4-hydroxy-5-(N-methyl)formamidopyrimidine.. It catalyses the reaction 2'-deoxyribonucleotide-(2'-deoxyribose 5'-phosphate)-2'-deoxyribonucleotide-DNA = a 3'-end 2'-deoxyribonucleotide-(2,3-dehydro-2,3-deoxyribose 5'-phosphate)-DNA + a 5'-end 5'-phospho-2'-deoxyribonucleoside-DNA + H(+). Involved in base excision repair of DNA damaged by oxidation or by mutagenic agents. Acts as a DNA glycosylase that recognizes and removes damaged bases. Has a preference for oxidized purines, such as 7,8-dihydro-8-oxoguanine (8-oxoG). Has AP (apurinic/apyrimidinic) lyase activity and introduces nicks in the DNA strand. Cleaves the DNA backbone by beta-delta elimination to generate a single-strand break at the site of the removed base with both 3'- and 5'-phosphates. The polypeptide is Formamidopyrimidine-DNA glycosylase (Pseudoalteromonas atlantica (strain T6c / ATCC BAA-1087)).